The following is a 432-amino-acid chain: ATP-dependent RNA helicase RhlB (432 aa).

The Q motif signature appears at 9–37; the sequence is QNFADLGLQPQVIDGLNAKGFIKCTPIQA. The Helicase ATP-binding domain maps to 40 to 219; it reads LPVLLAGQDI…FEHMQEPEHV (180 aa). Residue 53–60 coordinates ATP; it reads AQTGTGKT. The short motif at 165 to 168 is the DEAD box element; that stretch reads DEAD. The region spanning 245–390 is the Helicase C-terminal domain; it reads ALLQTLIEEE…QSDYDASALL (146 aa). The segment at 396-432 is disordered; that stretch reads PLRLQRRPQQNRRNNNGQRQGGNRKHTRPRQPRNTQS. Residues 417–426 show a composition bias toward basic residues; sequence GNRKHTRPRQ.

It belongs to the DEAD box helicase family. RhlB subfamily. In terms of assembly, component of the RNA degradosome, which is a multiprotein complex involved in RNA processing and mRNA degradation.

Its subcellular location is the cytoplasm. The catalysed reaction is ATP + H2O = ADP + phosphate + H(+). DEAD-box RNA helicase involved in RNA degradation. Has RNA-dependent ATPase activity and unwinds double-stranded RNA. This chain is ATP-dependent RNA helicase RhlB, found in Aliivibrio fischeri (strain ATCC 700601 / ES114) (Vibrio fischeri).